The sequence spans 287 residues: Energy-coupling factor transporter ATP-binding protein EcfA (287 aa).

An ABC transporter domain is found at 19-252 (FEIQNVSFSY…EEFLASSALD (234 aa)). Position 52–59 (52–59 (GHNGSGKS)) interacts with ATP.

Belongs to the ABC transporter superfamily. Energy-coupling factor EcfA family. Forms a stable energy-coupling factor (ECF) transporter complex composed of 2 membrane-embedded substrate-binding proteins (S component), 2 ATP-binding proteins (A component) and 2 transmembrane proteins (T component).

It is found in the cell membrane. ATP-binding (A) component of a common energy-coupling factor (ECF) ABC-transporter complex. Unlike classic ABC transporters this ECF transporter provides the energy necessary to transport a number of different substrates. This is Energy-coupling factor transporter ATP-binding protein EcfA from Malacoplasma penetrans (strain HF-2) (Mycoplasma penetrans).